The primary structure comprises 1178 residues: Phosphate system positive regulatory protein PHO81 (1178 aa).

An SPX domain is found at 1–169; sequence MKFGKYLEAR…QSHDKDFYLA (169 aa). The interval 210–250 is disordered; the sequence is QSSTFTNDDDDDNNTSNNNKHNNNNNNNNNNNNNNNNNNIL. Low complexity predominate over residues 223–250; the sequence is NTSNNNKHNNNNNNNNNNNNNNNNNNIL. ANK repeat units follow at residues 423–452, 458–487, 506–535, 556–586, 591–620, and 624–653; these read HSRV…LEDV, DSKT…ANAS, VQFD…KQNA, TGLC…DPNE, NKWT…RLDI, and NGHS…NLPS. In terms of domain architecture, GP-PDE spans 871–1178; it reads IINYEPYWKS…ELLFENNIDM (308 aa). At Ser-956 the chain carries Phosphoserine.

In terms of assembly, associates specifically with the PHO80-PHO85 and PCL7-PHO85 cyclin-CDK complexes, and much of this interaction is mediated through the PHO80 and PCL7 cyclin subunits. Interacts with the transcription factor PHO4. In terms of processing, phosphorylated by the cyclin-CDK PHO80-PHO85. Phosphorylation mediates the formation of a stable interaction with the cyclin-CDK and is required for function as an active inhibitor of the complex under phosphate starvation conditions.

The protein resides in the cytoplasm. It is found in the nucleus. Its function is as follows. Inhibits the kinase activity of the cyclin-CDKs PHO80-PHO85 and PCL7-PHO85 under low-phosphate conditions. This Saccharomyces cerevisiae (strain ATCC 204508 / S288c) (Baker's yeast) protein is Phosphate system positive regulatory protein PHO81 (PHO81).